The chain runs to 190 residues: MDAAGVAAKPSLSRKPSPSFRLRNGSLNALRLRRVFDLFDRNGDGEITLDEMASALDALGLGADRAGLEATVGGYIPAGAAGLRFGDFEALHRALGDALFGPVEEEEPGKQGEDDDEGDMKEAFRVFDEDGDGFISAAELQAVLKKLGLPEARNLATVQEMICNVDRDCDGRVDFGEFKCMMQGITVWGA.

EF-hand domains are found at residues 27–62, 115–150, and 153–188; these read LNAL…LGLG, DDEG…LGLP, and RNLA…ITVW. Asp40, Asn42, Asp44, Glu46, Glu51, Asp128, Asp130, Asp132, Glu139, Asp166, Asp168, Asp170, Arg172, and Glu177 together coordinate Ca(2+).

Its function is as follows. Potential calcium sensor. This chain is Probable calcium-binding protein CML27 (CML27), found in Oryza sativa subsp. japonica (Rice).